The primary structure comprises 94 residues: Small ribosomal subunit protein uS17 (94 aa).

This sequence belongs to the universal ribosomal protein uS17 family. In terms of assembly, part of the 30S ribosomal subunit.

One of the primary rRNA binding proteins, it binds specifically to the 5'-end of 16S ribosomal RNA. The chain is Small ribosomal subunit protein uS17 from Streptomyces griseus subsp. griseus (strain JCM 4626 / CBS 651.72 / NBRC 13350 / KCC S-0626 / ISP 5235).